The sequence spans 1066 residues: Allene oxide synthase-lipoxygenase protein (1066 aa).

The tract at residues 1-371 (MTWKNFGFEI…LKIGSLVPAG (371 aa)) is allene oxide synthase. Position 353 (tyrosine 353) interacts with heme. Residues 372–1066 (QNAIYNVEVE…PERIPNGTAI (695 aa)) form an arachidonate 8-lipoxygenase region. The region spanning 374–490 (AIYNVEVETG…KDMVLFPGEA (117 aa)) is the PLAT domain. Residues histidine 387, glycine 389, threonine 390, aspartate 391, asparagine 416, aspartate 417, glutamate 419, aspartate 452, and aspartate 454 each contribute to the Ca(2+) site. The Lipoxygenase domain occupies 491-1066 (TLPFNEVPAI…PERIPNGTAI (576 aa)). Positions 757, 762, 943, 947, and 1066 each coordinate Fe cation.

The protein in the C-terminal section; belongs to the lipoxygenase family. As to quaternary structure, dimer. Requires Ca(2+) as cofactor. Fe cation is required as a cofactor. The cofactor is heme.

The protein resides in the cytoplasm. It localises to the membrane. The catalysed reaction is (5Z,8Z,11Z,14Z)-eicosatetraenoate + O2 = (8R)-hydroperoxy-(5Z,9E,11Z,14Z)-eicosatetraenoate. The enzyme catalyses (8R)-hydroperoxy-(5Z,9E,11Z,14Z)-eicosatetraenoate = 8,9-epoxy-(5Z,9E,11Z,14Z)-eicosatetraenoate + H2O. It catalyses the reaction (5Z,8Z,11Z,14Z,17Z)-eicosapentaenoate + O2 = (8R)-hydroperoxy-(5Z,9E,11Z,14Z,17Z)-eicosapentaenoate. It carries out the reaction (4Z,7Z,10Z,13Z,16Z,19Z)-docosahexaenoate + O2 = 10-hydroperoxy-(4Z,7Z,11E,13Z,16Z,19Z)-docosahexaenoate. The catalysed reaction is (8Z,11Z,14Z)-eicosatrienoate + O2 = (8R)-hydroperoxy-(9E,11Z,14Z)-eicosatrienoate. The enzyme catalyses (8Z,11Z,14Z)-eicosatrienoate + O2 = 10-hydroperoxy-(8Z,11Z,14Z)-eicosatrienoate. It catalyses the reaction (8Z,11Z,14Z)-eicosatrienoate + O2 = 11-hydroperoxy-(8Z,12E,14Z)-eicosatrienoate. It functions in the pathway lipid metabolism; arachidonate metabolism. It participates in lipid metabolism; fatty acid metabolism. Lipoxygenase activity is stimulated by calcium, sodium, lithium and potassium ions. Calcium binding promotes interaction with membranes and thus facilitates access to substrates. Functionally, bifunctional enzyme which is responsible for allene oxide biosynthesis via a two-step reaction; first the lipoxygenase reaction that converts polyunsaturated fatty acids such as arachidonate ((5Z,8Z,11Z,14Z)-eicosatetraenoate) into a (8R)-hydroperoxide intermediate ((8R)-hydroperoxy-(5Z,9E,11Z,14Z)-eicosatetraenoate) followed by the allene oxide synthase reaction that converts the hydroperoxide intermediate ((8R)-hydroperoxy-(5Z,9E,11Z,14Z)-eicosatetraenoate) into the allene oxide (8,9-epoxy-(5Z,9E,11Z,14Z)-eicosatetraenoate). Shows preference for C20 or C22 highly polyunsaturated fatty acids and no activity with C18 fatty acids in vitro. Fatty acid allene oxides are intermediates in the formation of cyclopentenones or hydrolytic products in marine systems, most notably the prostanoid-related clavulones. In Plexaura homomalla (Black sea rod), this protein is Allene oxide synthase-lipoxygenase protein.